Reading from the N-terminus, the 146-residue chain is uncharacterized protein (146 aa).

The helical transmembrane segment at 7-27 (FVLSITIVLVILIIIAFIWYN) threads the bilayer.

The protein belongs to the asfivirus E146L family.

It localises to the host membrane. The protein localises to the virion. This is an uncharacterized protein from African swine fever virus (strain Badajoz 1971 Vero-adapted) (Ba71V).